An 86-amino-acid chain; its full sequence is Large ribosomal subunit protein uL23 (86 aa).

It belongs to the universal ribosomal protein uL23 family. As to quaternary structure, part of the 50S ribosomal subunit. Contacts protein L29.

Functionally, binds to 23S rRNA. One of the proteins that surrounds the polypeptide exit tunnel on the outside of the ribosome. This Aeropyrum pernix (strain ATCC 700893 / DSM 11879 / JCM 9820 / NBRC 100138 / K1) protein is Large ribosomal subunit protein uL23.